We begin with the raw amino-acid sequence, 215 residues long: UPF0502 protein YceH (215 aa).

An N6-acetyllysine modification is found at K80.

Belongs to the UPF0502 family.

The polypeptide is UPF0502 protein YceH (Escherichia coli O81 (strain ED1a)).